We begin with the raw amino-acid sequence, 152 residues long: Phospholipase A2 (152 aa).

The signal sequence occupies residues 1–20 (MAACHRILLLLSVAVASGAA). Intrachain disulfides connect C39/C96, C53/C142, C55/C70, C69/C124, C75/C149, C76/C117, C85/C110, and C103/C115. Ca(2+) is bound by residues G56 and G58. H73 is an active-site residue. D74 lines the Ca(2+) pocket. The active site involves D118.

Belongs to the phospholipase A2 family. As to expression, expressed by the venom gland. Heavily expressed in the venom gland transcriptome.

The protein localises to the secreted. It catalyses the reaction a 1,2-diacyl-sn-glycero-3-phosphocholine + H2O = a 1-acyl-sn-glycero-3-phosphocholine + a fatty acid + H(+). PA2 catalyzes the calcium-dependent hydrolysis of the 2-acyl groups in 3-sn-phosphoglycerides. The protein is Phospholipase A2 of Meiacanthus atrodorsalis (Forktail blenny).